The following is a 370-amino-acid chain: 2-oxoisovalerate dehydrogenase subunit beta, mitochondrial (370 aa).

Residues 1–25 (MLRGNNIKKVNSLLVRSFHSTVGNR) constitute a mitochondrion transit peptide. Residue Tyr130 coordinates thiamine diphosphate. 4 residues coordinate K(+): Gly156, Leu158, Thr159, and Glu209.

As to quaternary structure, heterotetramer of 2 alpha and 2 beta chains. The cofactor is thiamine diphosphate.

It is found in the mitochondrion matrix. The catalysed reaction is N(6)-[(R)-lipoyl]-L-lysyl-[protein] + 3-methyl-2-oxobutanoate + H(+) = N(6)-[(R)-S(8)-2-methylpropanoyldihydrolipoyl]-L-lysyl-[protein] + CO2. In terms of biological role, the branched-chain alpha-keto dehydrogenase complex catalyzes the overall conversion of alpha-keto acids to acyl-CoA and CO(2). It contains multiple copies of three enzymatic components: branched-chain alpha-keto acid decarboxylase (E1), lipoamide acyltransferase (E2) and lipoamide dehydrogenase (E3). This is 2-oxoisovalerate dehydrogenase subunit beta, mitochondrial (bkdB) from Dictyostelium discoideum (Social amoeba).